A 459-amino-acid polypeptide reads, in one-letter code: Alcohol acyl transferase 2 (459 aa).

Active-site proton acceptor residues include histidine 164 and asparagine 385.

It belongs to the plant acyltransferase family. As to expression, highly expressed in the cortex and skin of ripe fruit.

Involved in the biosynthesis of volatile esters which confer ripe apple fruit flavor. Alcohol acyl transferase that can use a wide range of alcohols as substrate to produce esters. In Malus domestica (Apple), this protein is Alcohol acyl transferase 2.